We begin with the raw amino-acid sequence, 141 residues long: Pheromone-binding protein-related protein 6 (141 aa).

The N-terminal stretch at 1–16 (MVKYPLILLLIGCAAA) is a signal peptide. 3 disulfides stabilise this stretch: Cys-41-Cys-72, Cys-68-Cys-120, and Cys-111-Cys-129.

The protein belongs to the PBP/GOBP family. Antenna. Mostly expressed in two types of sensory hairs, sensilla trichodea and small sensilla basiconica, in the ventro-lateral region of the third antennal segment (at protein level).

It localises to the secreted. The chain is Pheromone-binding protein-related protein 6 (Obp83b) from Drosophila melanogaster (Fruit fly).